A 256-amino-acid polypeptide reads, in one-letter code: Thiazole synthase (256 aa).

Lys95 serves as the catalytic Schiff-base intermediate with DXP. 1-deoxy-D-xylulose 5-phosphate contacts are provided by residues Gly156, 182-183 (AG), and 204-205 (NT).

It belongs to the ThiG family. In terms of assembly, homotetramer. Forms heterodimers with either ThiH or ThiS.

The protein resides in the cytoplasm. It catalyses the reaction [ThiS sulfur-carrier protein]-C-terminal-Gly-aminoethanethioate + 2-iminoacetate + 1-deoxy-D-xylulose 5-phosphate = [ThiS sulfur-carrier protein]-C-terminal Gly-Gly + 2-[(2R,5Z)-2-carboxy-4-methylthiazol-5(2H)-ylidene]ethyl phosphate + 2 H2O + H(+). Its pathway is cofactor biosynthesis; thiamine diphosphate biosynthesis. Functionally, catalyzes the rearrangement of 1-deoxy-D-xylulose 5-phosphate (DXP) to produce the thiazole phosphate moiety of thiamine. Sulfur is provided by the thiocarboxylate moiety of the carrier protein ThiS. In vitro, sulfur can be provided by H(2)S. This chain is Thiazole synthase, found in Salmonella schwarzengrund (strain CVM19633).